The primary structure comprises 333 residues: DNA-directed RNA polymerase subunit alpha (333 aa).

The interval 1-251 is alpha N-terminal domain (alpha-NTD); sequence MEKLTKIKHR…AHFQTIGDLT (251 aa). Residues 272–333 are alpha C-terminal domain (alpha-CTD); that stretch reads DMEIRLLNLS…KLNEYGKLKN (62 aa).

Belongs to the RNA polymerase alpha chain family. As to quaternary structure, homodimer. The RNAP catalytic core consists of 2 alpha, 1 beta, 1 beta' and 1 omega subunit. When a sigma factor is associated with the core the holoenzyme is formed, which can initiate transcription.

It catalyses the reaction RNA(n) + a ribonucleoside 5'-triphosphate = RNA(n+1) + diphosphate. In terms of biological role, DNA-dependent RNA polymerase catalyzes the transcription of DNA into RNA using the four ribonucleoside triphosphates as substrates. This Mycoplasmopsis synoviae (strain 53) (Mycoplasma synoviae) protein is DNA-directed RNA polymerase subunit alpha.